We begin with the raw amino-acid sequence, 150 residues long: MKKNYYIGACIALILSGPTFAQGEMHNTNEQIAEQSSVDLIAEIYHSDRYAETFVESEQFEQEESTSKEPILFVTPYDQLKDKLESWADLHGYVVKWNTQKTVQFDNAVAYEGDFEQVLTELASDINQIGIDINFKIFQKNKVIVVYSVR.

In terms of biological role, involved in TCP pilus biogenesis. In Vibrio cholerae serotype O1 (strain ATCC 39315 / El Tor Inaba N16961), this protein is Toxin coregulated pilus biosynthesis protein Q (tcpQ).